Reading from the N-terminus, the 208-residue chain is ATP-dependent Clp protease proteolytic subunit (208 aa).

Residue Ser106 is the Nucleophile of the active site. Residue His131 is part of the active site.

Belongs to the peptidase S14 family. Fourteen ClpP subunits assemble into 2 heptameric rings which stack back to back to give a disk-like structure with a central cavity, resembling the structure of eukaryotic proteasomes.

Its subcellular location is the cytoplasm. The enzyme catalyses Hydrolysis of proteins to small peptides in the presence of ATP and magnesium. alpha-casein is the usual test substrate. In the absence of ATP, only oligopeptides shorter than five residues are hydrolyzed (such as succinyl-Leu-Tyr-|-NHMec, and Leu-Tyr-Leu-|-Tyr-Trp, in which cleavage of the -Tyr-|-Leu- and -Tyr-|-Trp bonds also occurs).. Its function is as follows. Cleaves peptides in various proteins in a process that requires ATP hydrolysis. Has a chymotrypsin-like activity. Plays a major role in the degradation of misfolded proteins. The sequence is that of ATP-dependent Clp protease proteolytic subunit from Dinoroseobacter shibae (strain DSM 16493 / NCIMB 14021 / DFL 12).